A 117-amino-acid polypeptide reads, in one-letter code: Large ribosomal subunit protein bL20 (117 aa).

This sequence belongs to the bacterial ribosomal protein bL20 family.

Its function is as follows. Binds directly to 23S ribosomal RNA and is necessary for the in vitro assembly process of the 50S ribosomal subunit. It is not involved in the protein synthesizing functions of that subunit. This is Large ribosomal subunit protein bL20 from Histophilus somni (strain 129Pt) (Haemophilus somnus).